Here is a 157-residue protein sequence, read N- to C-terminus: Crossover junction endodeoxyribonuclease RuvC (157 aa).

Residues aspartate 7, glutamate 67, and aspartate 140 contribute to the active site. Aspartate 7, glutamate 67, and aspartate 140 together coordinate Mg(2+).

Belongs to the RuvC family. As to quaternary structure, homodimer which binds Holliday junction (HJ) DNA. The HJ becomes 2-fold symmetrical on binding to RuvC with unstacked arms; it has a different conformation from HJ DNA in complex with RuvA. In the full resolvosome a probable DNA-RuvA(4)-RuvB(12)-RuvC(2) complex forms which resolves the HJ. It depends on Mg(2+) as a cofactor.

The protein localises to the cytoplasm. It carries out the reaction Endonucleolytic cleavage at a junction such as a reciprocal single-stranded crossover between two homologous DNA duplexes (Holliday junction).. The RuvA-RuvB-RuvC complex processes Holliday junction (HJ) DNA during genetic recombination and DNA repair. Endonuclease that resolves HJ intermediates. Cleaves cruciform DNA by making single-stranded nicks across the HJ at symmetrical positions within the homologous arms, yielding a 5'-phosphate and a 3'-hydroxyl group; requires a central core of homology in the junction. The consensus cleavage sequence is 5'-(A/T)TT(C/G)-3'. Cleavage occurs on the 3'-side of the TT dinucleotide at the point of strand exchange. HJ branch migration catalyzed by RuvA-RuvB allows RuvC to scan DNA until it finds its consensus sequence, where it cleaves and resolves the cruciform DNA. This Rickettsia prowazekii (strain Madrid E) protein is Crossover junction endodeoxyribonuclease RuvC.